We begin with the raw amino-acid sequence, 718 residues long: Ophiobolin F synthase oblA (718 aa).

Residues 1-320 (MACKYSTLID…RYNGPTKFNE (320 aa)) form a (7Z)-ophiobola-7,19-dien-3-ol synthase region. Positions 93 and 97 each coordinate Mg(2+). Asp93 is a substrate binding site. The short motif at 93-97 (DDVID) is the DDXXD 1 element. Substrate contacts are provided by residues 180-183 (RALD), Asn224, 228-232 (SFEKE), and 311-312 (RY). The NSE/DTE signature appears at 224–232 (NDLFSFEKE). Residues 321-718 (LQLLRSEHGL…LRVMLELLKV (398 aa)) form a geranylfarnesyl diphosphate synthase region. The segment at 346–391 (LVEGDCHESKPNELKRKRNGVSVDDEMRTNGTNGAKKPAHVSQPST) is disordered. Residues 349–359 (GDCHESKPNEL) show a composition bias toward basic and acidic residues. 3 residues coordinate isopentenyl diphosphate: Lys429, Arg432, and His461. Mg(2+) contacts are provided by Asp468 and Asp472. Positions 468-472 (DDLED) match the DDXXD 2 motif. Arg477 is a binding site for dimethylallyl diphosphate. Arg478 serves as a coordination point for isopentenyl diphosphate. Residues Lys555, Thr556, Gln594, Asn601, Lys611, and Lys621 each coordinate dimethylallyl diphosphate.

In the N-terminal section; belongs to the terpene synthase family. The protein in the C-terminal section; belongs to the FPP/GGPP synthase family. The cofactor is Mg(2+).

It carries out the reaction isopentenyl diphosphate + (2E,6E)-farnesyl diphosphate = (2E,6E,10E)-geranylgeranyl diphosphate + diphosphate. It catalyses the reaction isopentenyl diphosphate + (2E,6E,10E)-geranylgeranyl diphosphate = (2E,6E,10E,14E)-geranylfarnesyl diphosphate + diphosphate. The catalysed reaction is (2E,6E,10E,14E)-geranylfarnesyl diphosphate + H2O = ophiobolin F + diphosphate. It functions in the pathway secondary metabolite biosynthesis; terpenoid biosynthesis. Its function is as follows. Bifunctional sesterterpene synthase; part of the gene cluster that mediates the biosynthesis of the sesterterpenes ophiobolins, fungal phytotoxins with potential anti-cancer activities. The first step of the pathway is performed by the sesterterpene synthase oblA that possesses both prenyl transferase and terpene cyclase activity, converting isopentenyl diphosphate and dimethylallyl diphosphate into geranylfarnesyl diphosphate (GFPP) and further converting GFPP into ophiobolin F, respectively. Other sesterterpenoids (C(25) terpenoids) are found as minor products of oblA. It is expected that ophiobolin F is then oxidized to ophiobolin A via ophiobolin C and ophiobolin B intermediates by the combined action of the cytochrome P450 monooxygenase oblB and the FAD-dependent oxidoreductase oblC. Although oblB catalyzes multistep oxygenations at C5 and C21/C7 in a relatively efficient manner, it is unable to convert ophiobolin F to ophiobolin C and produces instead several unexpected derivatives. In Aspergillus clavatus (strain ATCC 1007 / CBS 513.65 / DSM 816 / NCTC 3887 / NRRL 1 / QM 1276 / 107), this protein is Ophiobolin F synthase oblA.